The sequence spans 617 residues: RNA polymerase sigma factor RpoD (617 aa).

Residues 192–222 (NITNDSNENEDENEDENEDEDENSIDPELAN) are disordered. Acidic residues predominate over residues 198–216 (NENEDENEDENEDEDENSI). The interval 383 to 453 (MVEANLRLVI…TRSIADQART (71 aa)) is sigma-70 factor domain-2. The short motif at 407-410 (DLIQ) is the Interaction with polymerase core subunit RpoC element. The tract at residues 462-538 (ETINKLNRIS…DTTLELPLDS (77 aa)) is sigma-70 factor domain-3. The interval 551 to 604 (VLSGLTAREAKVLRMRFGIDMNTDHTLEEVGKQFDVTRERIRQIEAKALRKLRH) is sigma-70 factor domain-4. The H-T-H motif DNA-binding region spans 577-596 (LEEVGKQFDVTRERIRQIEA).

The protein belongs to the sigma-70 factor family. RpoD/SigA subfamily. Interacts transiently with the RNA polymerase catalytic core.

It localises to the cytoplasm. In terms of biological role, sigma factors are initiation factors that promote the attachment of RNA polymerase to specific initiation sites and are then released. This sigma factor is the primary sigma factor during exponential growth. The protein is RNA polymerase sigma factor RpoD of Buchnera aphidicola subsp. Schizaphis graminum (strain Sg).